We begin with the raw amino-acid sequence, 854 residues long: Translation initiation factor IF-2 (854 aa).

2 disordered regions span residues 52 to 79 (RQHG…RDGG) and 128 to 265 (RKQE…HGFQ). Over residues 61 to 75 (SQRITLQRKTTSTLS) the composition is skewed to polar residues. 2 stretches are compositionally biased toward basic and acidic residues: residues 128–150 (RKQE…RQEA) and 211–232 (VRHD…DNKR). A compositionally biased stretch (basic residues) spans 247–257 (RGKLGRKNKKP). The tr-type G domain maps to 354 to 523 (KRAPVVTVMG…LLQAEVLELT (170 aa)). Residues 363-370 (GHVDHGKT) form a G1 region. 363–370 (GHVDHGKT) contributes to the GTP binding site. Residues 388–392 (GITQH) are G2. The tract at residues 409 to 412 (DTPG) is G3. Residue 409-413 (DTPGH) coordinates GTP. The tract at residues 463 to 466 (TKID) is G4. Residues 499-501 (SAK) form a G5 region.

This sequence belongs to the TRAFAC class translation factor GTPase superfamily. Classic translation factor GTPase family. IF-2 subfamily.

Its subcellular location is the cytoplasm. In terms of biological role, one of the essential components for the initiation of protein synthesis. Protects formylmethionyl-tRNA from spontaneous hydrolysis and promotes its binding to the 30S ribosomal subunits. Also involved in the hydrolysis of GTP during the formation of the 70S ribosomal complex. This chain is Translation initiation factor IF-2, found in Marinomonas sp. (strain MWYL1).